We begin with the raw amino-acid sequence, 258 residues long: MLAIISPAKTLDYQSAVPKFEISQPQLTQYSQQLIDICKQLSPAQIASLMSISDKLAGLNAARFADWQADHNEQNARPAIYAFKGDVYTGLDVESLTSDDVLFAQQHLRMLSGLYGLLKPLDLMQPYRLEMGTKLANKKGKDLYAFWGNVITQTLQQALDEQGDNILVNLASDEYYKAVQASQLKARIIKPVFLDNKGGKYKVISFYAKKARGLMCRYIIQNRLTEAEQLKEFNLAGYWFDEAASTKDEFVFKRDLGE.

It belongs to the UPF0246 family.

The chain is UPF0246 protein MS0374 from Mannheimia succiniciproducens (strain KCTC 0769BP / MBEL55E).